The following is a 63-amino-acid chain: Metallothionein-1 (63 aa).

2 repeats span residues 23–30 (CGDKCECK) and 56–63 (CGDKCECK).

This sequence belongs to the metallothionein superfamily. Type 9 family.

Functionally, the metallothioneins are involved in the cellular sequestration of toxic metal ions. The protein is Metallothionein-1 (MT-I) of Candida glabrata (strain ATCC 2001 / BCRC 20586 / JCM 3761 / NBRC 0622 / NRRL Y-65 / CBS 138) (Yeast).